We begin with the raw amino-acid sequence, 1071 residues long: Ubiquitin carboxyl-terminal hydrolase 7 (1071 aa).

A disordered region spans residues 467–532 (KARLQQEQQQ…MPTTPEIPPP (66 aa)). Positions 471-480 (QQEQQQQQQQ) are enriched in low complexity. Positions 481-495 (PDSQDSFSAKESSTK) are enriched in polar residues. 2 stretches are compositionally biased toward pro residues: residues 497–507 (PEPPSWKPPDL) and 516–532 (PPPPPVSMPTTPEIPPP). The region spanning 609 to 1069 (TGLRNLGNTC…DVYVLFYERV (461 aa)) is the USP domain. Cys-618 (nucleophile) is an active-site residue. The tract at residues 913–942 (RMLGGSGKRSSSSTPFSTGGNDSNNSSDYK) is disordered. The segment covering 920-932 (KRSSSSTPFSTGG) has biased composition (polar residues). His-1014 acts as the Proton acceptor in catalysis.

It belongs to the peptidase C19 family.

Its subcellular location is the cytoplasm. It catalyses the reaction Thiol-dependent hydrolysis of ester, thioester, amide, peptide and isopeptide bonds formed by the C-terminal Gly of ubiquitin (a 76-residue protein attached to proteins as an intracellular targeting signal).. In terms of biological role, involved in the sorting of ubiquitinated cargo proteins at the multivesicular body (MVB). This Saccharomyces cerevisiae (strain ATCC 204508 / S288c) (Baker's yeast) protein is Ubiquitin carboxyl-terminal hydrolase 7 (UBP7).